Consider the following 483-residue polypeptide: NADH-quinone oxidoreductase subunit N (483 aa).

The next 13 helical transmembrane spans lie at L9–F29, P35–G55, A69–G89, A104–I124, F158–F178, V201–A221, A234–F254, V272–T292, L297–G317, L325–L345, I368–F388, V404–Y424, and A449–L469.

This sequence belongs to the complex I subunit 2 family. In terms of assembly, NDH-1 is composed of 14 different subunits. Subunits NuoA, H, J, K, L, M, N constitute the membrane sector of the complex.

The protein resides in the cell inner membrane. It carries out the reaction a quinone + NADH + 5 H(+)(in) = a quinol + NAD(+) + 4 H(+)(out). Its function is as follows. NDH-1 shuttles electrons from NADH, via FMN and iron-sulfur (Fe-S) centers, to quinones in the respiratory chain. The immediate electron acceptor for the enzyme in this species is believed to be ubiquinone. Couples the redox reaction to proton translocation (for every two electrons transferred, four hydrogen ions are translocated across the cytoplasmic membrane), and thus conserves the redox energy in a proton gradient. The polypeptide is NADH-quinone oxidoreductase subunit N (Caulobacter sp. (strain K31)).